The sequence spans 487 residues: Serralysin (487 aa).

Positions 1–16 are excised as a propeptide; it reads MQSTKKAIEITESNFA. Histidine 192 is a Zn(2+) binding site. The active site involves glutamate 193. Zn(2+)-binding residues include histidine 196, histidine 202, and tyrosine 232. The Ca(2+) site is built by arginine 269, glycine 271, threonine 273, aspartate 301, glycine 303, glycine 304, aspartate 306, threonine 343, glutamate 345, glycine 350, glycine 352, aspartate 354, asparagine 359, alanine 361, asparagine 363, glycine 367, glycine 368, alanine 369, aspartate 372, glycine 376, glycine 377, glycine 378, glycine 379, aspartate 381, glycine 385, glycine 386, alanine 387, glycine 388, aspartate 390, aspartate 399, aspartate 406, and aspartate 416. Hemolysin-type calcium-binding repeat units lie at residues 348–365 and 366–383; these read IGGSGNDVIVGNAANNVL and KGGAGNDVLFGGGGADEL.

Belongs to the peptidase M10B family. It depends on Ca(2+) as a cofactor. Zn(2+) serves as cofactor.

The protein localises to the secreted. It catalyses the reaction Preferential cleavage of bonds with hydrophobic residues in P1'.. Its function is as follows. Naturally present in the silkworm intestine and allows the emerging moth to dissolve its cocoon. In Serratia marcescens (strain ATCC 21074 / E-15), this protein is Serralysin.